The sequence spans 158 residues: 6,7-dimethyl-8-ribityllumazine synthase (158 aa).

Residues F22, 57-59 (AVE), and 81-83 (AVI) each bind 5-amino-6-(D-ribitylamino)uracil. 86-87 (GT) lines the (2S)-2-hydroxy-3-oxobutyl phosphate pocket. The active-site Proton donor is H89. F114 serves as a coordination point for 5-amino-6-(D-ribitylamino)uracil. Position 128 (R128) interacts with (2S)-2-hydroxy-3-oxobutyl phosphate.

This sequence belongs to the DMRL synthase family. Forms an icosahedral capsid composed of 60 subunits, arranged as a dodecamer of pentamers.

It catalyses the reaction (2S)-2-hydroxy-3-oxobutyl phosphate + 5-amino-6-(D-ribitylamino)uracil = 6,7-dimethyl-8-(1-D-ribityl)lumazine + phosphate + 2 H2O + H(+). It participates in cofactor biosynthesis; riboflavin biosynthesis; riboflavin from 2-hydroxy-3-oxobutyl phosphate and 5-amino-6-(D-ribitylamino)uracil: step 1/2. Catalyzes the formation of 6,7-dimethyl-8-ribityllumazine by condensation of 5-amino-6-(D-ribitylamino)uracil with 3,4-dihydroxy-2-butanone 4-phosphate. This is the penultimate step in the biosynthesis of riboflavin. In Shewanella putrefaciens (strain CN-32 / ATCC BAA-453), this protein is 6,7-dimethyl-8-ribityllumazine synthase.